The following is a 417-amino-acid chain: Gamma-glutamyl phosphate reductase (417 aa).

Belongs to the gamma-glutamyl phosphate reductase family.

It localises to the cytoplasm. The catalysed reaction is L-glutamate 5-semialdehyde + phosphate + NADP(+) = L-glutamyl 5-phosphate + NADPH + H(+). It participates in amino-acid biosynthesis; L-proline biosynthesis; L-glutamate 5-semialdehyde from L-glutamate: step 2/2. In terms of biological role, catalyzes the NADPH-dependent reduction of L-glutamate 5-phosphate into L-glutamate 5-semialdehyde and phosphate. The product spontaneously undergoes cyclization to form 1-pyrroline-5-carboxylate. This Desulfitobacterium hafniense (strain Y51) protein is Gamma-glutamyl phosphate reductase.